The following is a 355-amino-acid chain: UDP-N-acetylglucosamine--N-acetylmuramyl-(pentapeptide) pyrophosphoryl-undecaprenol N-acetylglucosamine transferase (355 aa).

Residues 15 to 17, Asn127, Arg163, Ser191, Ile244, 263 to 268, and Gln288 contribute to the UDP-N-acetyl-alpha-D-glucosamine site; these read TGG and ALTVSE.

It belongs to the glycosyltransferase 28 family. MurG subfamily.

The protein resides in the cell inner membrane. It catalyses the reaction di-trans,octa-cis-undecaprenyl diphospho-N-acetyl-alpha-D-muramoyl-L-alanyl-D-glutamyl-meso-2,6-diaminopimeloyl-D-alanyl-D-alanine + UDP-N-acetyl-alpha-D-glucosamine = di-trans,octa-cis-undecaprenyl diphospho-[N-acetyl-alpha-D-glucosaminyl-(1-&gt;4)]-N-acetyl-alpha-D-muramoyl-L-alanyl-D-glutamyl-meso-2,6-diaminopimeloyl-D-alanyl-D-alanine + UDP + H(+). It functions in the pathway cell wall biogenesis; peptidoglycan biosynthesis. In terms of biological role, cell wall formation. Catalyzes the transfer of a GlcNAc subunit on undecaprenyl-pyrophosphoryl-MurNAc-pentapeptide (lipid intermediate I) to form undecaprenyl-pyrophosphoryl-MurNAc-(pentapeptide)GlcNAc (lipid intermediate II). This Shigella flexneri serotype 5b (strain 8401) protein is UDP-N-acetylglucosamine--N-acetylmuramyl-(pentapeptide) pyrophosphoryl-undecaprenol N-acetylglucosamine transferase.